The chain runs to 101 residues: MATYITEDCINCGACEPECPNEAISEGDEIYVIDPELCTECVGFYDHEACQAVCPVECCLPNPQIVETEEVLIARAVRLHPDDGELKKRAAANDYPSRFRK.

4Fe-4S ferredoxin-type domains are found at residues 1–29 (MATYITEDCINCGACEPECPNEAISEGDE) and 31–64 (YVIDPELCTECVGFYDHEACQAVCPVECCLPNPQ). [4Fe-4S] cluster contacts are provided by cysteine 9, cysteine 12, cysteine 15, cysteine 19, cysteine 38, cysteine 41, cysteine 50, and cysteine 54.

Requires [4Fe-4S] cluster as cofactor.

Its function is as follows. Ferredoxins are iron-sulfur proteins that transfer electrons in a wide variety of metabolic reactions. Fdx2 can receive electrons from both FdR_A and FdR_B ferredoxin reductases, with a preference for FdR_B compared with FdR_A, and transfer the electrons to the cytochrome P450 CYP260A1. The protein is Ferredoxin Fdx2 of Sorangium cellulosum (strain So ce56) (Polyangium cellulosum (strain So ce56)).